A 211-amino-acid chain; its full sequence is Outer surface protein C (211 aa).

The first 18 residues, 1-18 (MKKNTLSAILMTLFLFIS), serve as a signal peptide directing secretion. A lipid anchor (N-palmitoyl cysteine) is attached at Cys19. Cys19 is lipidated: S-diacylglycerol cysteine.

The protein belongs to the OspC lipoprotein family. As to quaternary structure, homodimer. Interacts with tick I.ricinus salivary protein Iric-1, Iric-2 and Iric-3. Binds human (host) plasminogen.

It localises to the cell outer membrane. Its subcellular location is the cell surface. Its function is as follows. Major immunodominant protein in mammalian hosts. Required for initial stages of mammalian infection. Inhibits macrophage-mediated phagocytosis of the bacteria. Binds human plasminogen; this probably confers an extracellular protease activity on the bacteria that allows it to traverse tissue. Interaction with tick I.ricinus salivary protein Salp15 protects the bacteria from antibody-mediated killing in vitro and in vivo. The sequence is that of Outer surface protein C from Borreliella burgdorferi (Lyme disease spirochete).